The following is a 95-amino-acid chain: Probable FAD-linked sulfhydryl oxidase OPG072 (95 aa).

At 1–8 the chain is on the intravirion side; the sequence is MNPKHWGR. In terms of domain architecture, ERV/ALR sulfhydryl oxidase spans 1–95; the sequence is MNPKHWGRAV…AIDVSKVKPL (95 aa). Residues 9–25 traverse the membrane as a helical segment; that stretch reads AVWTIIFIVLSQAGLDG. Residues 26–95 are Virion surface-facing; sequence NIEACKRKLY…AIDVSKVKPL (70 aa). C43 and C46 form a disulfide bridge.

This sequence belongs to the orthopoxvirus OPG072 family. In terms of assembly, interacts with OPG128; this interaction involves formation of a transient disulfide-bonded intermediate, allowing disulfide bond transfer. It depends on FAD as a cofactor.

It is found in the virion membrane. It localises to the host cytoplasm. The enzyme catalyses 2 R'C(R)SH + O2 = R'C(R)S-S(R)CR' + H2O2. Functionally, FAD-dependent sulfhydryl oxidase that catalyzes disulfide bond formation. The complete pathway for formation of disulfide bonds in intracellular virion membrane proteins sequentially involves thiol-disulfide transfer between OPG072, OPG128 and OPG088. This chain is Probable FAD-linked sulfhydryl oxidase OPG072 (OPG072), found in Monkeypox virus.